A 369-amino-acid chain; its full sequence is Protein HGH1 homolog (369 aa).

Belongs to the HGH1 family.

This Drosophila melanogaster (Fruit fly) protein is Protein HGH1 homolog.